The chain runs to 313 residues: Olfactory receptor 1f45 (313 aa).

The Extracellular portion of the chain corresponds to 1-25; it reads MSSTNQSSVTEFLLLGLSRQPQQQQ. N-linked (GlcNAc...) asparagine glycosylation occurs at N5. A helical membrane pass occupies residues 26–50; the sequence is LLFLLFLIMYLATVLGNLLIILAIG. Residues 51-57 lie on the Cytoplasmic side of the membrane; that stretch reads TDSRLHT. The chain crosses the membrane as a helical span at residues 58-79; the sequence is PMYFFLSNLSFVDVCFSSTTVP. Residues 80–100 are Extracellular-facing; sequence KVLANHILGSQAISFSGCLTQ. C97 and C189 are joined by a disulfide. Residues 101 to 120 form a helical membrane-spanning segment; it reads LYFLAVFGNMDNFLLAVMSY. Residues 121-139 are Cytoplasmic-facing; it reads DRFVAICHPLHYTTKMTRQ. A helical membrane pass occupies residues 140 to 158; the sequence is LCVLLVVGSWVVANMNCLL. The Extracellular segment spans residues 159-196; the sequence is HILLMARLSFCADNMIPHFFCDGTPLLKLSCSDTHLNE. A helical membrane pass occupies residues 197-219; it reads LMILTEGAVVMVTPFVCILISYI. Topologically, residues 220 to 236 are cytoplasmic; that stretch reads HITCAVLRVSSPRGGWK. A helical membrane pass occupies residues 237-260; sequence SFSTCGSHLAVVCLFYGTVIAVYF. Over 261–272 the chain is Extracellular; it reads NPSSSHLAGRDM. The helical transmembrane segment at 273–292 threads the bilayer; sequence AAAVMYAVVTPMLNPFIYSL. The Cytoplasmic segment spans residues 293–313; sequence RNSDMKAALRKVLAMRFPSKQ.

This sequence belongs to the G-protein coupled receptor 1 family. As to expression, olfactory epithelium.

It localises to the cell membrane. Odorant receptor. The chain is Olfactory receptor 1f45 (Or1f45) from Rattus norvegicus (Rat).